The primary structure comprises 547 residues: Phosphomethylpyrimidine synthase (547 aa).

The span at 1-15 (MTETLSKTTEPSVTT) shows a compositional bias: polar residues. The tract at residues 1–36 (MTETLSKTTEPSVTTGPIPGSSKAYREVANPDGGPS) is disordered. Residues N150, M179, Y208, H244, 264 to 266 (SRG), 305 to 308 (DGLR), and E344 contribute to the substrate site. H348 contacts Zn(2+). Y371 contributes to the substrate binding site. Zn(2+) is bound at residue H412. [4Fe-4S] cluster is bound by residues C492, C495, and C500.

It belongs to the ThiC family. Requires [4Fe-4S] cluster as cofactor.

The enzyme catalyses 5-amino-1-(5-phospho-beta-D-ribosyl)imidazole + S-adenosyl-L-methionine = 4-amino-2-methyl-5-(phosphooxymethyl)pyrimidine + CO + 5'-deoxyadenosine + formate + L-methionine + 3 H(+). It functions in the pathway cofactor biosynthesis; thiamine diphosphate biosynthesis. Its function is as follows. Catalyzes the synthesis of the hydroxymethylpyrimidine phosphate (HMP-P) moiety of thiamine from aminoimidazole ribotide (AIR) in a radical S-adenosyl-L-methionine (SAM)-dependent reaction. This Mycobacterium leprae (strain Br4923) protein is Phosphomethylpyrimidine synthase.